The chain runs to 127 residues: Large ribosomal subunit protein bL20 (127 aa).

This sequence belongs to the bacterial ribosomal protein bL20 family.

Functionally, binds directly to 23S ribosomal RNA and is necessary for the in vitro assembly process of the 50S ribosomal subunit. It is not involved in the protein synthesizing functions of that subunit. The sequence is that of Large ribosomal subunit protein bL20 from Bifidobacterium adolescentis (strain ATCC 15703 / DSM 20083 / NCTC 11814 / E194a).